The following is a 514-amino-acid chain: MSKKPTVLMILDGYGLNEKTEGNAIALAKKPVLDKLMKDYPFVKGNASGMAVGLPEGQMGNSEVGHLNMGAGRIVYQELTRITKEIQDGDFFENTQLIKAVENCKKNNTALHLFGLLSDGGVHSHITHLYGLLELAKRHGLENVYVHAFLDGRDTAPTSGKSFMEALEAKMAELGVGRIASVTGRYYVMDRDNRWDRVEKAYAALVDGEGVEAANAVEAVAASYAEGVNDEFVLPTVVVKDGKAIAPIKANDSIIFFNFRPDRAREITRAFCTDDFDGFVRKSGRLPLTYVCFSEYDVTIPNKSVAFEKVSITNTFGEYLAEHGKTQARIAETEKYAHVTFFFNGGVEAPNEGEDRILVNSPKVATYDLQPEMSANAVADKLVEAITSLKYDVIIVNFANPDMVGHTGISDAAIKAVEAVDACVGRAYDALLSVDGQMFICADHGNAEQLVDYTNGEPFTAHTTNPVPFILINYDDSYTLREGGCLADIIPTLIEMMKMEQPKEMTGKSLLIKK.

The Mn(2+) site is built by D12 and S62. S62 functions as the Phosphoserine intermediate in the catalytic mechanism. Residues H123, R153–D154, R185, R191, R260–R263, and K335 contribute to the substrate site. Mn(2+) is bound by residues D402, H406, D443, H444, and H462.

This sequence belongs to the BPG-independent phosphoglycerate mutase family. As to quaternary structure, monomer. The cofactor is Mn(2+).

It catalyses the reaction (2R)-2-phosphoglycerate = (2R)-3-phosphoglycerate. Its pathway is carbohydrate degradation; glycolysis; pyruvate from D-glyceraldehyde 3-phosphate: step 3/5. Functionally, catalyzes the interconversion of 2-phosphoglycerate and 3-phosphoglycerate. This chain is 2,3-bisphosphoglycerate-independent phosphoglycerate mutase, found in Lachnoclostridium phytofermentans (strain ATCC 700394 / DSM 18823 / ISDg) (Clostridium phytofermentans).